The primary structure comprises 63 residues: Large ribosomal subunit protein uL29 (63 aa).

It belongs to the universal ribosomal protein uL29 family.

The polypeptide is Large ribosomal subunit protein uL29 (Enterobacter sp. (strain 638)).